The primary structure comprises 467 residues: Cysteine--tRNA ligase (467 aa).

Cys-28 provides a ligand contact to Zn(2+). The short motif at 30–40 is the 'HIGH' region element; that stretch reads MTVYDHCHLGH. Zn(2+)-binding residues include Cys-209, His-234, and Glu-238. Positions 266–270 match the 'KMSKS' region motif; the sequence is KMSKS. Residue Lys-269 coordinates ATP.

It belongs to the class-I aminoacyl-tRNA synthetase family. In terms of assembly, monomer. The cofactor is Zn(2+).

The protein resides in the cytoplasm. It carries out the reaction tRNA(Cys) + L-cysteine + ATP = L-cysteinyl-tRNA(Cys) + AMP + diphosphate. The polypeptide is Cysteine--tRNA ligase (Nitrosomonas eutropha (strain DSM 101675 / C91 / Nm57)).